Here is a 565-residue protein sequence, read N- to C-terminus: Protein NRT1/ PTR FAMILY 5.15 (565 aa).

Transmembrane regions (helical) follow at residues 49–67 (FAYF…GPLG) and 80–100 (WSGT…AYLG). Thr-104 is modified (phosphothreonine). 10 consecutive transmembrane segments (helical) span residues 110–130 (LIYI…IMGL), 142–162 (SIWV…GQGG), 189–209 (FFNW…IVVA), 217–237 (WAFG…IFLL), 331–351 (IPIW…ITFF), 368–388 (IPAA…VPLY), 409–429 (LQRI…AALV), 454–474 (IWWF…SMVG), 490–510 (IGLS…GFLI), and 534–554 (YFYW…LFIS).

This sequence belongs to the major facilitator superfamily. Proton-dependent oligopeptide transporter (POT/PTR) (TC 2.A.17) family. In terms of tissue distribution, expressed in shoots, roots and leaves.

It localises to the membrane. This chain is Protein NRT1/ PTR FAMILY 5.15 (NPF5.15), found in Arabidopsis thaliana (Mouse-ear cress).